Consider the following 237-residue polypeptide: Small ribosomal subunit protein uS3 (237 aa).

The KH type-2 domain maps to 39 to 107; the sequence is IRAYLMEELK…ETHLNIVEVR (69 aa). A disordered region spans residues 213–237; sequence MASERRATESDNQGGGGRDRRRENA.

This sequence belongs to the universal ribosomal protein uS3 family. In terms of assembly, part of the 30S ribosomal subunit. Forms a tight complex with proteins S10 and S14.

Its function is as follows. Binds the lower part of the 30S subunit head. Binds mRNA in the 70S ribosome, positioning it for translation. This Sinorhizobium fredii (strain NBRC 101917 / NGR234) protein is Small ribosomal subunit protein uS3.